Reading from the N-terminus, the 143-residue chain is Large ribosomal subunit protein uL11 (143 aa).

The protein belongs to the universal ribosomal protein uL11 family. In terms of assembly, part of the ribosomal stalk of the 50S ribosomal subunit. Interacts with L10 and the large rRNA to form the base of the stalk. L10 forms an elongated spine to which L12 dimers bind in a sequential fashion forming a multimeric L10(L12)X complex. One or more lysine residues are methylated.

Its function is as follows. Forms part of the ribosomal stalk which helps the ribosome interact with GTP-bound translation factors. The polypeptide is Large ribosomal subunit protein uL11 (Pseudomonas fluorescens (strain SBW25)).